Here is an 805-residue protein sequence, read N- to C-terminus: Shutoff protein (805 aa).

The interval 1 to 88 (MESVEKEDSL…QVGRGDQRHG (88 aa)) is disordered. Residues 18 to 29 (TTASTDAANAPT) are compositionally biased toward polar residues. 2 stretches are compositionally biased toward basic and acidic residues: residues 59–70 (RSVPTEDKKQDQ) and 79–88 (QVGRGDQRHG). A binding to host EIF4G region spans residues 280-345 (VMSELIVRRA…AVLVTVELEC (66 aa)). Residues 348–466 (RFFADPEMQR…DLWTAFNERS (119 aa)) form the RRM domain. Phosphotyrosine; by host is present on residues tyrosine 365 and tyrosine 682. The disordered stretch occupies residues 684 to 805 (DPQSGEELNP…AGTACSPTQP (122 aa)). A compositionally biased stretch (gly residues) spans 726 to 742 (GRGGILGQSGRGGFGRG). The segment covering 754 to 763 (RSFRGRRGVR) has biased composition (basic residues).

The protein belongs to the adenoviridae shutoff protein family. In terms of assembly, monomer. Interacts with hexon protein; this interaction allows chaperoning and trimerization of hexon proteins. Interacts (via N-terminus) with host initiation factor EIF4G (via C-terminus). Interacts (via RRM domain) with viral mRNAs that contain the tripartite leader; this interaction allows ribosome shunting and expression of viral late mRNAs. Might be cleaved by the viral protease. In terms of processing, phosphorylated. Tyrosine phosphorylation enhances preferential binding to tripartite leader mRNAs and allows ribosome shunting. Post-translationally, methylated. Asymmetric dimethylation by host PRMT1 of the Arg/Gly-rich region may regulate shutoff protein binding to hexon and promote the capsid assembly in the nucleus.

It localises to the host cytoplasm. Its function is as follows. Protein that inhibits host translation while promoting late viral translation by ribosome shunting. Blocks host cap-dependent translation by binding to eIF4G, displacing MKNK1 from cap initiation complexes and preventing EIF4E phosphorylation. Binds to the tripartite leader sequence of viral late mRNAs and recruits host eIF4G, PABPC1/poly-A binding protein and 40S ribosomes subunits on viral mRNAs, allowing ribosome shunting and efficient translation of late viral mRNAs even though conventional translation via ribosome scanning from the cap has been shut off in the host cell. During assembly, acts as a chaperone protein that helps hexon proteins assembly into trimers. This chain is Shutoff protein, found in Homo sapiens (Human).